A 70-amino-acid polypeptide reads, in one-letter code: Kappa-conotoxin-like Sx11.2 (70 aa).

A signal peptide spans 1-26; the sequence is MMFRVTSVGCLLLVIVFLNLVVPTSA. Intrachain disulfides connect cysteine 27–cysteine 41, cysteine 34–cysteine 46, cysteine 40–cysteine 50, and cysteine 45–cysteine 54. A 4-carboxyglutamate mark is found at glutamate 30, glutamate 35, and glutamate 44. 4-hydroxyproline is present on proline 53. Proline amide is present on proline 57. Positions 61–70 are excised as a propeptide; sequence SKLQEFFRQR.

Belongs to the conotoxin I2 superfamily. Expressed by the venom duct.

It is found in the secreted. Modulator of potassium channels, specifically up-modulates the calcium and voltage-gated BK channels, has no effect on single channel conductance, but increases the open probability of BK channels. The sequence is that of Kappa-conotoxin-like Sx11.2 from Conus striolatus (Cone snail).